Consider the following 306-residue polypeptide: Aspartate carbamoyltransferase catalytic subunit (306 aa).

Carbamoyl phosphate contacts are provided by arginine 51 and threonine 52. Lysine 80 provides a ligand contact to L-aspartate. 3 residues coordinate carbamoyl phosphate: arginine 101, histidine 129, and glutamine 132. Residues arginine 162 and arginine 224 each contribute to the L-aspartate site. Residues leucine 263 and proline 264 each contribute to the carbamoyl phosphate site.

The protein belongs to the aspartate/ornithine carbamoyltransferase superfamily. ATCase family. In terms of assembly, heterododecamer (2C3:3R2) of six catalytic PyrB chains organized as two trimers (C3), and six regulatory PyrI chains organized as three dimers (R2).

It carries out the reaction carbamoyl phosphate + L-aspartate = N-carbamoyl-L-aspartate + phosphate + H(+). Its pathway is pyrimidine metabolism; UMP biosynthesis via de novo pathway; (S)-dihydroorotate from bicarbonate: step 2/3. Its function is as follows. Catalyzes the condensation of carbamoyl phosphate and aspartate to form carbamoyl aspartate and inorganic phosphate, the committed step in the de novo pyrimidine nucleotide biosynthesis pathway. This chain is Aspartate carbamoyltransferase catalytic subunit, found in Parabacteroides distasonis (strain ATCC 8503 / DSM 20701 / CIP 104284 / JCM 5825 / NCTC 11152).